We begin with the raw amino-acid sequence, 211 residues long: Stromal cell-derived factor 2 (211 aa).

The N-terminal stretch at 1 to 18 (MAVVPLLLLGGLWSAVGA) is a signal peptide. 3 consecutive MIR domains span residues 21–75 (LGVV…IRGK), 83–138 (GTPI…VLCN), and 139–193 (GPYW…AMEG).

It localises to the secreted. In Homo sapiens (Human), this protein is Stromal cell-derived factor 2 (SDF2).